Consider the following 583-residue polypeptide: Complement factor I (583 aa).

Residues 1–18 (MKLLHVFLLFLCFHLRFC) form the signal peptide. 17 cysteine pairs are disulfide-bonded: cysteine 33-cysteine 255, cysteine 43-cysteine 54, cysteine 48-cysteine 59, cysteine 61-cysteine 93, cysteine 67-cysteine 86, cysteine 75-cysteine 106, cysteine 141-cysteine 181, cysteine 154-cysteine 214, cysteine 186-cysteine 196, cysteine 229-cysteine 247, cysteine 241-cysteine 256, cysteine 259-cysteine 271, cysteine 266-cysteine 284, cysteine 278-cysteine 293, cysteine 327-cysteine 453, cysteine 365-cysteine 381, and cysteine 373-cysteine 444. One can recognise a Kazal-like domain in the interval 55 to 108 (IEGTCVCKLPYQCPKNGTAVCATNRRSFPTYCQQKSLECLHPGTKFLNNGTCTA). N-linked (GlcNAc...) asparagine glycosylation occurs at asparagine 70. N-linked (GlcNAc...) (complex) asparagine glycosylation occurs at asparagine 103. One can recognise an SRCR domain in the interval 114-212 (VSLKHGNTDS…TMGYQDFADV (99 aa)). Asparagine 177 carries N-linked (GlcNAc...) asparagine glycosylation. LDL-receptor class A domains lie at 213 to 257 (VCYT…LCCK) and 258 to 294 (ACQG…VGCA). Ca(2+) is bound by residues lysine 239, aspartate 242, isoleucine 244, aspartate 246, aspartate 252, and glutamate 253. Residues tyrosine 276, asparagine 279, glutamate 281, aspartate 283, aspartate 289, and glutamate 290 each contribute to the Ca(2+) site. The region spanning 340–574 (IVGGKRAQLG…YFDWISYHVG (235 aa)) is the Peptidase S1 domain. Active-site charge relay system residues include histidine 380 and aspartate 429. N-linked (GlcNAc...) asparagine glycosylation is found at asparagine 464 and asparagine 494. 3 disulfides stabilise this stretch: cysteine 467–cysteine 531, cysteine 495–cysteine 510, and cysteine 521–cysteine 550. Residue serine 525 is the Charge relay system of the active site. Asparagine 536 is a glycosylation site (N-linked (GlcNAc...) asparagine).

This sequence belongs to the peptidase S1 family. In terms of assembly, heterodimer of a light and heavy chains; disulfide-linked. The fully processed and mature protein circulates as a zymogen, and is allosterically activated by substrate-induced remodeling of the active site. Interacts with C3b. Interacts with complement factor H. As to quaternary structure, (Microbial infection) Interacts with Staphylococcus aureus clumping factor A/ClfA; this interaction enhances cleavage of C3b into iC3b by CFI. As to expression, expressed in the liver by hepatocytes. Also present in other cells such as monocytes, fibroblasts or keratinocytes.

The protein localises to the secreted. It localises to the extracellular space. The enzyme catalyses Inactivates complement subcomponents C3b, iC3b and C4b by proteolytic cleavage.. Its function is as follows. Trypsin-like serine protease that plays an essential role in regulating the immune response by controlling all complement pathways. Inhibits these pathways by cleaving three peptide bonds in the alpha-chain of C3b and two bonds in the alpha-chain of C4b thereby inactivating these proteins. Essential cofactors for these reactions include factor H and C4BP in the fluid phase and membrane cofactor protein/CD46 and CR1 on cell surfaces. The presence of these cofactors on healthy cells allows degradation of deposited C3b by CFI in order to prevent undesired complement activation, while in apoptotic cells or microbes, the absence of such cofactors leads to C3b-mediated complement activation and subsequent opsonization. In Homo sapiens (Human), this protein is Complement factor I (CFI).